The primary structure comprises 209 residues: Kynurenine formamidase (209 aa).

Tryptophan 18 contacts substrate. Zn(2+) is bound by residues histidine 48, histidine 52, and aspartate 54. Residue histidine 58 is the Proton donor/acceptor of the active site. Residues histidine 160 and glutamate 172 each contribute to the Zn(2+) site.

It belongs to the Cyclase 1 superfamily. KynB family. In terms of assembly, homodimer. The cofactor is Zn(2+).

It carries out the reaction N-formyl-L-kynurenine + H2O = L-kynurenine + formate + H(+). It participates in amino-acid degradation; L-tryptophan degradation via kynurenine pathway; L-kynurenine from L-tryptophan: step 2/2. In terms of biological role, catalyzes the hydrolysis of N-formyl-L-kynurenine to L-kynurenine, the second step in the kynurenine pathway of tryptophan degradation. The polypeptide is Kynurenine formamidase (Maricaulis maris (strain MCS10) (Caulobacter maris)).